Here is a 269-residue protein sequence, read N- to C-terminus: Embryonic polyadenylate-binding protein 2 (269 aa).

Residues 26 to 54 are disordered; sequence EAQGWGAWGRTEKTSLVPSAGSDKEAEEN. One can recognise an RRM domain in the interval 139–216; that stretch reads RSVYVGNVDY…RVIKVLPKRT (78 aa). Residues 240–269 are disordered; it reads LQGSLQRKPRLRPHGQSRGRGRASPWFSPY. A compositionally biased stretch (basic residues) spans 246–260; the sequence is RKPRLRPHGQSRGRG.

It is found in the cytoplasm. Functionally, binds the poly(A) tail of mRNA. The protein is Embryonic polyadenylate-binding protein 2 (Pabpn1l) of Rattus norvegicus (Rat).